Consider the following 131-residue polypeptide: MSWQTYVDDHLLCEIEGNHLTHAAILGQDGSVWAKSASFPQFKPEEITGIMNDFNEPGTLAPTGLYIGGTKYMVIQGEPGSVIRGKKGPGGVTVKKTNLALVIGIYDEPMTPGQCNMIVERLGDYLIEQGL.

The protein belongs to the profilin family. In terms of assembly, occurs in many kinds of cells as a complex with monomeric actin in a 1:1 ratio. In terms of tissue distribution, cytoplasmic distribution in hypocotyls. In root nodules, it is found in all cells, but is more abundant in the vascular tissue as well as the endodermis.

The protein localises to the cytoplasm. The protein resides in the cytoskeleton. Binds to actin and affects the structure of the cytoskeleton. At high concentrations, profilin prevents the polymerization of actin, whereas it enhances it at low concentrations. By binding to PIP2, it inhibits the formation of IP3 and DG. The sequence is that of Profilin-1 from Phaseolus vulgaris (Kidney bean).